The following is a 338-amino-acid chain: DNA-directed RNA polymerase subunit alpha (338 aa).

The alpha N-terminal domain (alpha-NTD) stretch occupies residues 1–234 (MIQKNWQELI…DQLNVFVNFE (234 aa)). Residues 250 to 338 (FNPALLKKVD…ELAKRFEEHY (89 aa)) are alpha C-terminal domain (alpha-CTD).

It belongs to the RNA polymerase alpha chain family. Homodimer. The RNAP catalytic core consists of 2 alpha, 1 beta, 1 beta' and 1 omega subunit. When a sigma factor is associated with the core the holoenzyme is formed, which can initiate transcription.

The catalysed reaction is RNA(n) + a ribonucleoside 5'-triphosphate = RNA(n+1) + diphosphate. In terms of biological role, DNA-dependent RNA polymerase catalyzes the transcription of DNA into RNA using the four ribonucleoside triphosphates as substrates. This Beijerinckia indica subsp. indica (strain ATCC 9039 / DSM 1715 / NCIMB 8712) protein is DNA-directed RNA polymerase subunit alpha.